The sequence spans 519 residues: Cytochrome P450 monooxygenase easM (519 aa).

Residues 16-33 (VAPALFASSISVLFLILS) form a helical membrane-spanning segment. N-linked (GlcNAc...) asparagine glycans are attached at residues Asn50 and Asn353. Position 458 (Cys458) interacts with heme.

It belongs to the cytochrome P450 family. It depends on heme as a cofactor.

The protein resides in the membrane. It functions in the pathway alkaloid biosynthesis; ergot alkaloid biosynthesis. Cytochrome P450 monooxygenase; part of the gene cluster that mediates the biosynthesis of fumiclavanine C, a fungal ergot alkaloid. DmaW catalyzes the first step of ergot alkaloid biosynthesis by condensing dimethylallyl diphosphate (DMAP) and tryptophan to form 4-dimethylallyl-L-tryptophan. The second step is catalyzed by the methyltransferase easF that methylates 4-dimethylallyl-L-tryptophan in the presence of S-adenosyl-L-methionine, resulting in the formation of 4-dimethylallyl-L-abrine. The catalase easC and the FAD-dependent oxidoreductase easE then transform 4-dimethylallyl-L-abrine to chanoclavine-I which is further oxidized by EasD in the presence of NAD(+), resulting in the formation of chanoclavine-I aldehyde. EasA reduces chanoclavine-I aldehyde to dihydrochanoclavine-I aldehyde that spontaneously dehydrates to form 6,8-dimethyl-6,7-didehydroergoline. EasG then catalyzes the reduction of 6,8-dimethyl-6,7-didehydroergoline to form festuclavine. Hydrolysis of festuclavine by easM then leads to the formation of fumigaclavine B which is in turn acetylated by easN to fumigaclavine A. Finally, easL catalyzes the conversion of fumigaclavine A into fumigaclavine C by attaching a dimethylallyl moiety to C-2 of the indole nucleus. This chain is Cytochrome P450 monooxygenase easM, found in Aspergillus fumigatus (strain ATCC MYA-4609 / CBS 101355 / FGSC A1100 / Af293) (Neosartorya fumigata).